The chain runs to 545 residues: Chaperonin GroEL (545 aa).

Residues 29-32 (TLGP), K50, 86-90 (DGTTT), G415, and D495 contribute to the ATP site.

This sequence belongs to the chaperonin (HSP60) family. In terms of assembly, forms a cylinder of 14 subunits composed of two heptameric rings stacked back-to-back. Interacts with the co-chaperonin GroES.

The protein localises to the cytoplasm. It carries out the reaction ATP + H2O + a folded polypeptide = ADP + phosphate + an unfolded polypeptide.. In terms of biological role, together with its co-chaperonin GroES, plays an essential role in assisting protein folding. The GroEL-GroES system forms a nano-cage that allows encapsulation of the non-native substrate proteins and provides a physical environment optimized to promote and accelerate protein folding. The chain is Chaperonin GroEL from Porphyromonas gingivalis (strain ATCC BAA-308 / W83).